The chain runs to 467 residues: Mothers against decapentaplegic homolog 2 (467 aa).

Position 2 is an N-acetylserine (Ser-2). Thr-8 bears the Phosphothreonine mark. One can recognise an MH1 domain in the interval 10-176 (PVVKRLLGWK…YQRVETPVLP (167 aa)). Residue Lys-19 is modified to N6-acetyllysine. Zn(2+) is bound by residues Cys-74, Cys-149, Cys-161, and His-166. The span at 207-217 (PAGIEPQSNYI) shows a compositional bias: polar residues. The segment at 207-251 (PAGIEPQSNYIPETPPPGYISEDGETSDQQLNQSMDTGSPAELSP) is disordered. Thr-220 is subject to Phosphothreonine. The PY-motif signature appears at 221–225 (PPPGY). Positions 233–243 (SDQQLNQSMDT) are enriched in polar residues. A Phosphoserine; by CAMK2 modification is found at Ser-240. Residues Ser-245, Ser-250, Ser-255, Ser-458, Ser-460, and Ser-464 each carry the phosphoserine modification. An MH2 domain is found at 274 to 467 (WCSIAYYELN…SPSVRCSSMS (194 aa)). Ser-465 and Ser-467 each carry phosphoserine; by TGFBR1.

This sequence belongs to the dwarfin/SMAD family. In terms of assembly, monomer; in the absence of TGF-beta. Heterodimer; in the presence of TGF-beta. Forms a heterodimer with co-SMAD, SMAD4, in the nucleus to form the transactivation complex SMAD2/SMAD4. Found in a complex with SMAD3 and TRIM33 upon addition of TGF-beta. Identified in a complex that contains at least ZNF451, SMAD2, SMAD3 and SMAD4. Interacts (via the MH2 domain) with ZFYVE9; may form trimers with the SMAD4 co-SMAD. Interacts with TAZ/WWRT1. Interacts with FOXH1. Interacts with SNW1. Interacts with CREB-binding protein (CBP) and EP300. Interacts with SNON. Interacts with ALK4/ACVR1B. Interacts with SKOR1. Interacts with SKOR2. Interacts with PRDM16. Interacts (via MH2 domain) with LEMD3. Interacts with RBPMS. Interacts with WWP1. Interacts (dephosphorylated form, via the MH1 and MH2 domains) with RANBP3 (via its C-terminal R domain); the interaction results in the export of dephosphorylated SMAD3 out of the nucleus and termination of the TGF-beta signaling. Interacts with PDPK1 (via PH domain). Interacts with DAB2; the interactions are enhanced upon TGF-beta stimulation. Interacts with USP15. Interacts with PPP5C. Interacts with LDLRAD4 (via the SMAD interaction motif). Interacts (via MH2 domain) with PMEPA1 (via the SMAD interaction motif). Interacts with ZFHX3. Interacts with ZNF451. Interacts with SMURF2 when phosphorylated on Ser-465/467. Interacts with PPM1A. Interacts with TGF-beta. Interacts with TGFBR1. Interacts with TGIF. Interacts with SMAD3 and TRIM33. Interacts with ZNF580. Interacts with NEDD4L in response to TGF-beta. Interacts with HGS. Interacts with AIP1. Interacts with WWP1. Interacts with PML. Interacts weakly with ZNF8. Interacts (when phosphorylated) with RNF111; RNF111 acts as an enhancer of the transcriptional responses by mediating ubiquitination and degradation of SMAD2 inhibitors. Interacts with YAP1 (when phosphorylated at 'Ser-55'). Interacts when phosphorylated with IPO7; the interaction facilitates translocation of SMAD2 to the nucleus. Interacts with MTMR4; negatively regulates TGF-beta signaling through SMAD2 dephosphorylation and retention in endosomes. Post-translationally, in response to TGF-beta, phosphorylated on the C-terminal SXS motif by TGF-beta and activin type 1 receptor kinases, phosphorylation declines progressively in a KMT5A-dependent manner. Phosphorylation in this motif is required for interaction with a number of proteins including SMURF2, SNON and SMAD4 in response to TGF-beta. Dephosphorylated in this motif by PPM1A leading to disruption of the SMAD2/3-SMAD4 complex, nuclear export and termination of the TGF-beta signaling. In response to decorin, the naturally occurring inhibitor of TGF-beta signaling, phosphorylated on Ser-240 by CaMK2. Phosphorylated by MAPK3 upon EGF stimulation; which increases transcriptional activity and stability, and is blocked by calmodulin. Phosphorylated by PDPK1. Acetylated on Lys-19 by coactivators in response to TGF-beta signaling, which increases transcriptional activity. In terms of processing, in response to TGF-beta, ubiquitinated by NEDD4L; which promotes its degradation. Monoubiquitinated, leading to prevent DNA-binding. Deubiquitination by USP15 alleviates inhibition and promotes activation of TGF-beta target genes. Ubiquitinated by RNF111, leading to its degradation: only SMAD2 proteins that are 'in use' are targeted by RNF111, RNF111 playing a key role in activating SMAD2 and regulating its turnover.

The protein localises to the cytoplasm. The protein resides in the nucleus. Functionally, receptor-regulated SMAD (R-SMAD) that is an intracellular signal transducer and transcriptional modulator activated by TGF-beta (transforming growth factor) and activin type 1 receptor kinases. Binds the TRE element in the promoter region of many genes that are regulated by TGF-beta and, on formation of the SMAD2/SMAD4 complex, activates transcription. Promotes TGFB1-mediated transcription of odontoblastic differentiation genes in dental papilla cells. Positively regulates PDPK1 kinase activity by stimulating its dissociation from the 14-3-3 protein YWHAQ which acts as a negative regulator. This is Mothers against decapentaplegic homolog 2 (SMAD2) from Pongo abelii (Sumatran orangutan).